We begin with the raw amino-acid sequence, 350 residues long: GDSL esterase/lipase At2g42990 (350 aa).

The first 24 residues, 1–24 (MATHYLSPSILCIILTTLVSIAGA), serve as a signal peptide directing secretion. The active-site Nucleophile is S35. Residues N98, N117, and N141 are each glycosylated (N-linked (GlcNAc...) asparagine). Active-site residues include D325 and H328.

This sequence belongs to the 'GDSL' lipolytic enzyme family.

It localises to the secreted. The polypeptide is GDSL esterase/lipase At2g42990 (Arabidopsis thaliana (Mouse-ear cress)).